We begin with the raw amino-acid sequence, 95 residues long: Co-chaperonin GroES (95 aa).

Belongs to the GroES chaperonin family. As to quaternary structure, heptamer of 7 subunits arranged in a ring. Interacts with the chaperonin GroEL.

It is found in the cytoplasm. Its function is as follows. Together with the chaperonin GroEL, plays an essential role in assisting protein folding. The GroEL-GroES system forms a nano-cage that allows encapsulation of the non-native substrate proteins and provides a physical environment optimized to promote and accelerate protein folding. GroES binds to the apical surface of the GroEL ring, thereby capping the opening of the GroEL channel. The sequence is that of Co-chaperonin GroES from Aliivibrio salmonicida (strain LFI1238) (Vibrio salmonicida (strain LFI1238)).